Consider the following 131-residue polypeptide: D-ribose pyranase (131 aa).

His20 serves as the catalytic Proton donor. Residues Asp28, His98, and 120-122 (YAN) each bind substrate.

This sequence belongs to the RbsD / FucU family. RbsD subfamily. In terms of assembly, homodecamer.

Its subcellular location is the cytoplasm. It catalyses the reaction beta-D-ribopyranose = beta-D-ribofuranose. It functions in the pathway carbohydrate metabolism; D-ribose degradation; D-ribose 5-phosphate from beta-D-ribopyranose: step 1/2. In terms of biological role, catalyzes the interconversion of beta-pyran and beta-furan forms of D-ribose. This chain is D-ribose pyranase, found in Symbiobacterium thermophilum (strain DSM 24528 / JCM 14929 / IAM 14863 / T).